A 330-amino-acid chain; its full sequence is Biotin synthase 2 (330 aa).

The 231-residue stretch at 48–278 (MCGDGFDMCS…QAAIRLAGGR (231 aa)) folds into the Radical SAM core domain. [4Fe-4S] cluster contacts are provided by Cys66, Cys70, and Cys73. 4 residues coordinate [2Fe-2S] cluster: Ser111, Cys143, Cys203, and Arg273.

It belongs to the radical SAM superfamily. Biotin synthase family. As to quaternary structure, homodimer. [4Fe-4S] cluster is required as a cofactor. [2Fe-2S] cluster serves as cofactor.

It catalyses the reaction (4R,5S)-dethiobiotin + (sulfur carrier)-SH + 2 reduced [2Fe-2S]-[ferredoxin] + 2 S-adenosyl-L-methionine = (sulfur carrier)-H + biotin + 2 5'-deoxyadenosine + 2 L-methionine + 2 oxidized [2Fe-2S]-[ferredoxin]. It participates in cofactor biosynthesis; biotin biosynthesis; biotin from 7,8-diaminononanoate: step 2/2. In terms of biological role, catalyzes the conversion of dethiobiotin (DTB) to biotin by the insertion of a sulfur atom into dethiobiotin via a radical-based mechanism. This is Biotin synthase 2 from Corynebacterium diphtheriae (strain ATCC 700971 / NCTC 13129 / Biotype gravis).